The primary structure comprises 660 residues: F-box/LRR-repeat protein 5 (660 aa).

Positions 1–157 are hemerythrin-like; it reads MAPFPDEVDL…IKKKVIAQHC (157 aa). Residues His15, His57, Glu58, Glu61, His80, His124, and Glu127 each contribute to the Fe(3+) site. The 47-residue stretch at 200-246 folds into the F-box domain; it reads SASICNLPPEVMLNIFSYLNPQDLCRCSQVNTKWAQLARTGSLWRHL. The segment at 283 to 305 is disordered; it reads YQEWDEDADIDESEETGEDDPSI. Over residues 285-303 the composition is skewed to acidic residues; it reads EWDEDADIDESEETGEDDP. LRR repeat units lie at residues 311 to 337, 338 to 362, 363 to 389, 390 to 417, 551 to 576, 577 to 604, 605 to 630, and 631 to 649; these read EKEL…VLAY, SSAT…LDLT, QTDI…DLSG, CEKI…RLLK, IRDI…SLSG, CHQI…NLSG, CLNV…HFYY, and CDNI…QNLQ. 4 residues coordinate [2Fe-2S] cluster: Cys631, Cys645, Cys655, and Cys656.

As to quaternary structure, part of a SCF (SKP1-cullin-F-box) protein ligase complex. It depends on [2Fe-2S] cluster as a cofactor. In terms of processing, ubiquitinated upon iron and oxygen depletion, leading to its degradation by the proteasome. Ubiquitination is regulated by the hemerythrin-like region that acts as an oxygen and iron sensor.

Its subcellular location is the cytoplasm. The protein localises to the perinuclear region. The protein resides in the nucleus. Its pathway is protein modification; protein ubiquitination. Component of some SCF (SKP1-cullin-F-box) protein ligase complex that plays a central role in iron homeostasis by promoting the ubiquitination and subsequent degradation of ireb2/irp2. Upon high iron and oxygen level, it specifically recognizes and binds ireb2/irp2, promoting its ubiquitination and degradation by the proteasome. In Xenopus tropicalis (Western clawed frog), this protein is F-box/LRR-repeat protein 5 (fbxl5).